A 250-amino-acid chain; its full sequence is uncharacterized protein (250 aa).

The signal sequence occupies residues 1–17; it reads MRTLVLLSSVAILSTLA. N-linked (GlcNAc...) asparagine glycans are attached at residues Asn-48, Asn-159, Asn-223, and Asn-239.

The protein localises to the secreted. This is an uncharacterized protein from Caenorhabditis elegans.